A 976-amino-acid polypeptide reads, in one-letter code: MKRSVPQDFNLVYPYKAKRPNIMPPFFDRNGFVENQEATLAMLVEKPLTFDKEGALTLGVGRGIRINPAGLLETNDLASAVFPPLASDEAGNVTLNMSDGLYTKDNKLAVKVGPGLSLDSNNALQVHTGDGLTVTDDKVSLNTQAPLSTTSAGLSLLLGPSLHLGEEERLTVNTGAGLQISNNALAVKVGSGITVDAQNQLAASLGDGLESRDNKTVVKAGPGLTITNQALTVATGNGLQVNPEGQLQLNITAGQGLNFANNSLAVELGSGLHFPPGQNQVSLYPGDGIDIRDNRVTVPAGPGLRMLNHQLAVASGDGLEVHSDTLRLKLSHGLTFENGAVRAKLGPGLGTDDSGRSVVRTGRGLRVANGQVQIFSGRGTAIGTDSSLTLNIRAPLQFSGPALTASLQGSGPITYNSNNGTFGLSIGPGMWVDQNRLQVNPGAGLVFQGNNLVPNLADPLAISDSKISLSLGPGLTQASNALTLSLGNGLEFSNQAVAIKAGRGLRFESSSQALESSLTVGNGLTLTDTVIRPNLGDGLEVRDNKIIVKLGANLRFENGAVTAGTVNPSAPEAPPTLTAEPPLRASNSHLQLSLSEGLVVHNNALALQLGDGMEVNQHGLTLRVGSGLQMRDGILTVTPSGTPIEPRLTAPLTQTENGIGLALGAGLELDESALQVKVGPGMRLNPVEKYVTLLLGPGLSFGQPANRTNYDVRVSVEPPMVFGQRGQLTFLVGHGLHIQNSKLQLNLGQGLRTDPVTNQLEVPLGQGLEIADESQVRVKLGDGLQFDSQARITTAPNMVTETLWTGTGSNANVTWRGYTAPGSKLFLSLTRFSTGLVLGNMTIDSNASFGQYINAGHEQIECFILLDNQGNLKEGSNLQGTWEVKNNPSASKAAFLPSTALYPILNESRGSLPGKNLVGMQAILGGGGTCTVIATLNGRRSNNYPAGQSIIFVWQEFNTIARQPLNHSTLTFSYWT.

This sequence belongs to the adenoviridae fiber family. Homotrimer. Interacts (via N-terminal tail region) with pentons.

The protein resides in the virion. It is found in the host nucleus. Functionally, forms spikes that protrude from each vertex of the icosahedral capsid. Interacts with host receptor to provide virion initial attachment to target cell. Fiber proteins are shed during virus entry, when virus is still at the cell surface. The chain is Fiber protein from Bovine adenovirus B serotype 3 (BAdV-3).